The sequence spans 358 residues: Ribosomal RNA large subunit methyltransferase M (358 aa).

S-adenosyl-L-methionine-binding positions include S183, 216-219 (APGG), D235, D255, and D271. Residue K300 is the Proton acceptor of the active site.

Belongs to the class I-like SAM-binding methyltransferase superfamily. RNA methyltransferase RlmE family. RlmM subfamily. Monomer.

The protein resides in the cytoplasm. It catalyses the reaction cytidine(2498) in 23S rRNA + S-adenosyl-L-methionine = 2'-O-methylcytidine(2498) in 23S rRNA + S-adenosyl-L-homocysteine + H(+). Its function is as follows. Catalyzes the 2'-O-methylation at nucleotide C2498 in 23S rRNA. The chain is Ribosomal RNA large subunit methyltransferase M from Pseudomonas fluorescens (strain SBW25).